We begin with the raw amino-acid sequence, 1512 residues long: ATP-dependent permease YOR1 (1512 aa).

A disordered region spans residues 1-68 (MSPLLPTHWG…KGMKETEDGG (68 aa)). Residues 13 to 29 (APQNEPTLPSPSHSVST) are compositionally biased toward polar residues. The span at 31–65 (VGDEEKLRRSEGSDGEDRINLDSNKYDVKGMKETE) shows a compositional bias: basic and acidic residues. 5 helical membrane passes run 229–249 (ASLAMSLLDVFGWFFMSAGFI), 288–308 (GPGIGAAIGLLLLLICSSLGM), 363–385 (FAAGFSHMLWTAPVQMIVIIIIL), 475–495 (GMTAIAMSLPILAAILSFITY), and 507–527 (IFTVITLFNLMRMPLMMWPMT). Positions 246 to 533 (AGFIKVFGDT…WPMTLSSTAD (288 aa)) constitute an ABC transmembrane type-1 1 domain. Residues 594-656 (VLNGGKPGGP…SAPGIDEEIS (63 aa)) form a disordered region. The span at 619–643 (AEEIQAETAAGQPGAGEASAEGQGQ) shows a compositional bias: low complexity. An ABC transporter 1 domain is found at 651 to 871 (IDEEISEKKE…NGAFAKLIKE (221 aa)). 683–690 (GAIGSGKS) contributes to the ATP binding site. 4 helical membrane-spanning segments follow: residues 937 to 957 (GVFMLPLLFFCIVVAQSFYVI), 974 to 994 (NGFYMGIYAGLGVGLAIALFF), 1067 to 1087 (VILLAIIEPYFLIAMAVVSLL), and 1167 to 1187 (FLGSLLSFSVAIIVVCSSSVS). The ABC transmembrane type-1 2 domain maps to 943–1217 (LLFFCIVVAQ…LVRQIAEVEN (275 aa)). One can recognise an ABC transporter 2 domain in the interval 1255-1496 (IEFKDVRMRY…GGIFTEMCSK (242 aa)). ATP is bound at residue 1289–1296 (GRTGAGKS).

It belongs to the ABC transporter superfamily. ABCC family. Conjugate transporter (TC 3.A.1.208) subfamily.

Its subcellular location is the extracellular vesicle membrane. The protein resides in the secreted. Transmembrane transporter. May play a role in the packaging or formation of extracellular vesicles (EVs), and in the export of virulence factors from EVs. Required for efficient non-lytic exocytosis from host macrophages, the process by which the yeast escapes host macrophages with both host cell and pathogen remaining viable. This chain is ATP-dependent permease YOR1, found in Cryptococcus neoformans var. grubii serotype A (strain H99 / ATCC 208821 / CBS 10515 / FGSC 9487) (Filobasidiella neoformans var. grubii).